Consider the following 328-residue polypeptide: Tetraacyldisaccharide 4'-kinase (328 aa).

An ATP-binding site is contributed by 55 to 62; sequence TAGGNGKT.

The protein belongs to the LpxK family.

It carries out the reaction a lipid A disaccharide + ATP = a lipid IVA + ADP + H(+). The protein operates within glycolipid biosynthesis; lipid IV(A) biosynthesis; lipid IV(A) from (3R)-3-hydroxytetradecanoyl-[acyl-carrier-protein] and UDP-N-acetyl-alpha-D-glucosamine: step 6/6. Functionally, transfers the gamma-phosphate of ATP to the 4'-position of a tetraacyldisaccharide 1-phosphate intermediate (termed DS-1-P) to form tetraacyldisaccharide 1,4'-bis-phosphate (lipid IVA). In Shigella boydii serotype 18 (strain CDC 3083-94 / BS512), this protein is Tetraacyldisaccharide 4'-kinase.